The sequence spans 155 residues: Altered inheritance rate of mitochondria protein 29 (155 aa).

Phosphoserine is present on Ser-78.

This sequence belongs to the UPF0538 family.

The protein resides in the cytoplasm. Functionally, may be involved in mitochondrial organization and biogenesis. In Saccharomyces cerevisiae (strain ATCC 204508 / S288c) (Baker's yeast), this protein is Altered inheritance rate of mitochondria protein 29 (AIM29).